Here is a 235-residue protein sequence, read N- to C-terminus: Orotidine 5'-phosphate decarboxylase (235 aa).

Substrate is bound by residues Asp-12, Lys-34, 61–70 (DMKLLDIDNT), Thr-116, Arg-177, Gln-186, Gly-206, and Arg-207. Lys-63 serves as the catalytic Proton donor.

It belongs to the OMP decarboxylase family. Type 1 subfamily. As to quaternary structure, homodimer.

It catalyses the reaction orotidine 5'-phosphate + H(+) = UMP + CO2. Its pathway is pyrimidine metabolism; UMP biosynthesis via de novo pathway; UMP from orotate: step 2/2. Its function is as follows. Catalyzes the decarboxylation of orotidine 5'-monophosphate (OMP) to uridine 5'-monophosphate (UMP). The sequence is that of Orotidine 5'-phosphate decarboxylase from Rhizobium etli (strain ATCC 51251 / DSM 11541 / JCM 21823 / NBRC 15573 / CFN 42).